Here is a 319-residue protein sequence, read N- to C-terminus: Sulfate adenylyltransferase subunit 2 (319 aa).

Disordered regions lie at residues 1–22 (MNPG…TRRP) and 296–319 (RGAT…EGYF).

Belongs to the PAPS reductase family. CysD subfamily.

It catalyses the reaction sulfate + ATP + H(+) = adenosine 5'-phosphosulfate + diphosphate. The protein operates within antibiotic biosynthesis; mitomycin C biosynthesis. In terms of biological role, with CysN forms the ATP sulfurylase (ATPS) that catalyzes the adenylation of sulfate producing adenosine 5'-phosphosulfate (APS) and diphosphate, the first enzymatic step in sulfur assimilation pathway. APS synthesis involves the formation of a high-energy phosphoric-sulfuric acid anhydride bond driven by GTP hydrolysis by CysN coupled to ATP hydrolysis by CysD. This is Sulfate adenylyltransferase subunit 2 (mmcV) from Streptomyces lavendulae.